The chain runs to 1485 residues: MSLRSNKLLVAAVIFTVVTFGLLLTSSIFNNKTTTSLTYGGILPKFGQRIIEKKSNEEYIIEKIEHTQKDGEDVRSTRYLTHHSYLLRNLAKMEVKHHGKDFSINDICYKPHNAIFETTFAPENIDKLPNYLQRLILEAQRLSPCLIVTPLNCYHDSYRIHSEMSKWNTSNVTNFLNRKLRNSYIDAIGESEERPYIKSTYGPDLIKEWAHLMFKLPSKQTSSFSKKDLSSKIELWLSSIESKTNLTELGRPSEVDNYFDICTSMQQVHDFDERKRKFGLYDDDDEFLIGLDCVENKTKFIEWIQERELRGVSKPFNPNQQCDGIFKNSEGLEFFYGTRSFGNNTAPFDKMKTEIGLMTPEQILTTMLHSDFVNGFESIWTIERAQELLDDFRLAIRQEVKRFNENRSSLKIGIDTRVVQREESNETELEISSNLDSVVYFILFIRCVLLIFFAFFAWSVNPLRSAVMFLVRDALTSLLFSILCKSDGQIELNSELLGYIILLTIVNTYLTTRVSWYKDRNETCIQRAKDFPSRSNFSLLFSIDSLRENCDSRQLQYALAKLSKYLTALDTYSTETFMQLPNYWPFISILFVPITGCYWYFVDINLPKISVVLLPSFIVATIEQRQVEKSLLKERKAKKEFQKVQKKKMEKFLSDGAVDRLLSGNSESVEDKKLYKSKDCVIHKESAGRLYELSRSSYDVSKIMAYPNQRVRDFRFDALGCYFWLMKLKSAGILLYGSAVLFVLLSVAVMLIPIQRTSLQKDMNNEVYFGFSINNMSSDWANINKNLHAFNSEIDSIQSLQTISNWKKGFDRFEGRFYKNSSRISDANDYVEWMNQEPINWSVMAPLTRISPKFGIPSPFKFRFRYQIEVNNNESEVIDTVQRIDTLLTKYKGTLSSPIVDGVLYEYYHGNAAVWNSFVFNELLASGILSAFFALIVVIFSITPSISSVLIFSFFVIGSRLEIAAVISLFSLDNQQLYTDSAVLVGFLVAWAPFYELSLFRRRLLYKLKTRCTPELSSGKRIRPPFTKAVDTAQVFAIVLAASLIIAVVAGVVPEFQKFFWPTVILIVVQLVAFGNSIAVLVATNQMFEREVRNFLDNEFELGNGTTAGQVCHMAQKLIPPKYDIPIPMNDFHIRPTNMSKFYAPPPAKKRAKQTNNETDPEKKEDEPGTSNANNVSQEEAAHRLAILPWHFVLGGIPVDLTTRSDQIINGPFIGISSDAMRTHEINSELEDQDDYSSESSVEDVESDPAPEEEIKYHEENMLHMIEKVQKDAAEKEAKEKVHQVESAQRRAPNFDDPNVAGPSHRYQRNEERISTDIVPADPPREIPANPVPPPTHVLVQRAPRPHEMPPVIDRTIPRDPRTEPPNLQECIQQNDDPSLPPHPRRHQYPDHYGRAMISYCEDVYWTYNDGRLPPNVAMPPRPFDWHYRRVAPPEDFNYVPPPGQPSIPIPAEAMALREERARAHREQEQRDNSQSPSPSPEPGL.

Positions 1–28 (MSLRSNKLLVAAVIFTVVTFGLLLTSSI) are cleaved as a signal peptide. 9 consecutive transmembrane segments (helical) span residues 438–458 (VVYF…FFAW), 490–510 (IELN…NTYL), 584–604 (WPFI…FVDI), 732–752 (GILL…VMLI), 923–943 (LLAS…FSIT), 950–970 (LIFS…ISLF), 980–1000 (DSAV…LSLF), 1033–1053 (AQVF…AGVV), and 1063–1083 (TVIL…VLVA). The interaction with fem-3 stretch occupies residues 1131–1271 (DFHIRPTNMS…MLHMIEKVQK (141 aa)). The tract at residues 1143 to 1175 (YAPPPAKKRAKQTNNETDPEKKEDEPGTSNANN) is disordered. A helical membrane pass occupies residues 1181–1201 (AAHRLAILPWHFVLGGIPVDL). Disordered stretches follow at residues 1228 to 1252 (SELE…PAPE), 1275 to 1306 (EKEA…PSHR), and 1348 to 1384 (EMPP…PPHP). A compositionally biased stretch (basic and acidic residues) spans 1275–1284 (EKEAKEKVHQ). The segment at 1401–1422 (CEDVYWTYNDGRLPPNVAMPPR) is MX regulatory domain; required for tra-1 binding. The interval 1442–1485 (PPGQPSIPIPAEAMALREERARAHREQEQRDNSQSPSPSPEPGL) is disordered. Over residues 1456–1472 (ALREERARAHREQEQRD) the composition is skewed to basic and acidic residues.

Interacts with tra-1 and fem-3. Somatic and germline tissues.

It localises to the membrane. In terms of biological role, plays a major role in controlling sexual cell fates. Promotes female development in XX animals where it sequesters one or more of the FEM proteins to the membrane thereby freeing the tra-1 protein (a putative transcription factor) to enter the nucleus and promote female development. In XO animals it acts as a receptor for her-1 which prevents it from binding to FEM proteins thereby repressing the activity of tra-1. Negatively regulates male development when bound to fem-3 and is required together with tra-1 for promoting spermatogenesis. This is Sex-determining transformer protein 2 from Caenorhabditis remanei (Caenorhabditis vulgaris).